Here is a 205-residue protein sequence, read N- to C-terminus: Thymidylate kinase (205 aa).

10–17 (GIDGAGKT) contacts ATP.

Belongs to the thymidylate kinase family.

It carries out the reaction dTMP + ATP = dTDP + ADP. Phosphorylation of dTMP to form dTDP in both de novo and salvage pathways of dTTP synthesis. The protein is Thymidylate kinase of Nitrosospira multiformis (strain ATCC 25196 / NCIMB 11849 / C 71).